The primary structure comprises 146 residues: Hut operon positive regulatory protein (146 aa).

This sequence belongs to the HutP family. As to quaternary structure, homohexamer.

Functionally, antiterminator that binds to cis-acting regulatory sequences on the mRNA in the presence of histidine, thereby suppressing transcription termination and activating the hut operon for histidine utilization. The polypeptide is Hut operon positive regulatory protein (Bacillus mycoides (strain KBAB4) (Bacillus weihenstephanensis)).